The primary structure comprises 334 residues: 5-formaminoimidazole-4-carboxamide-1-(beta)-D-ribofuranosyl 5'-monophosphate synthetase (334 aa).

4 residues coordinate 5-amino-1-(5-phospho-beta-D-ribosyl)imidazole-4-carboxamide: serine 10, histidine 11, serine 71, and histidine 75. The region spanning 78-325 (IELVENMKVP…IAMEIREAIE (248 aa)) is the ATP-grasp domain. ATP contacts are provided by residues 132–142 (KPHGAKGGKGY), 173–176 (QEYV), and glutamate 204. Position 232 (asparagine 232) interacts with 5-amino-1-(5-phospho-beta-D-ribosyl)imidazole-4-carboxamide. Positions 270 and 283 each coordinate Mg(2+).

The protein belongs to the phosphohexose mutase family. In terms of assembly, homotrimer and homohexamer. Mg(2+) serves as cofactor. It depends on Mn(2+) as a cofactor.

The catalysed reaction is 5-amino-1-(5-phospho-beta-D-ribosyl)imidazole-4-carboxamide + formate + ATP = 5-formamido-1-(5-phospho-D-ribosyl)imidazole-4-carboxamide + ADP + phosphate. The protein operates within purine metabolism; IMP biosynthesis via de novo pathway; 5-formamido-1-(5-phospho-D-ribosyl)imidazole-4-carboxamide from 5-amino-1-(5-phospho-D-ribosyl)imidazole-4-carboxamide (formate route): step 1/1. Its function is as follows. Catalyzes the ATP- and formate-dependent formylation of 5-aminoimidazole-4-carboxamide-1-beta-d-ribofuranosyl 5'-monophosphate (AICAR) to 5-formaminoimidazole-4-carboxamide-1-beta-d-ribofuranosyl 5'-monophosphate (FAICAR) in the absence of folates. In Pyrococcus furiosus (strain ATCC 43587 / DSM 3638 / JCM 8422 / Vc1), this protein is 5-formaminoimidazole-4-carboxamide-1-(beta)-D-ribofuranosyl 5'-monophosphate synthetase.